Here is a 611-residue protein sequence, read N- to C-terminus: Probable potassium transport system protein Kup (611 aa).

The next 13 helical transmembrane spans lie at 24 to 44, 55 to 75, 102 to 122, 143 to 163, 175 to 195, 218 to 238, 252 to 272, 275 to 295, 296 to 316, 344 to 364, 374 to 394, 400 to 420, and 423 to 443; these read LVFG…FLFL, VSLI…FLAM, VAVF…ECVI, LIAQ…LFLF, FGPV…ISVA, LLGF…EALF, AWGF…AYLL, TDVI…LYIP, FLLL…SGIF, IYIN…LLIF, YGLA…AIFL, LYMG…LSTV, and ITHG…IVII.

It belongs to the HAK/KUP transporter (TC 2.A.72) family.

The protein resides in the cell membrane. It catalyses the reaction K(+)(in) + H(+)(in) = K(+)(out) + H(+)(out). Its function is as follows. Transport of potassium into the cell. Likely operates as a K(+):H(+) symporter. The protein is Probable potassium transport system protein Kup of Methanospirillum hungatei JF-1 (strain ATCC 27890 / DSM 864 / NBRC 100397 / JF-1).